A 523-amino-acid polypeptide reads, in one-letter code: MIEWTILSSLASALLAGGGTYLVYKKVSNANYKIHLEKAKARARAIEHEAEMILQEAKIRAKELEIGAKSKYENETSKVIKEYESYLIKLEKQEAKNQQRLERETQQLEEERRRINHKQASLSGMIEELEKLKGDYRSKLTESLEILSRVAGLTQEEAKELALAKATEESRAQIAQIVRKYESEAKEEGRKRANYILAQATTRFAGEFAAERLINVVNLPNDELKGRIIGKEGRNIKTLEMLSGVDVIIDDTPGAIVLSSFNLYRRAIATRTIEALVEDGRIQPARIEEVYKKVEQEFEEKVLEEGEGIVLDMELGYVHPELKKLIGRLKYRASYGQNALGHSLEVANLAGVIAGELGGDVKLAKRAGLLHDIGKALTHDFGGSHVDLGAEVCSRYKEHPVVINAIFAHHGHEEAKSIESAAVCAADALSAARPGARREVLESFLKRVQEIEKIAMEKLGVRQAYAINAGREVRVIVNADLINDEESVLLAQEIAKEIETKVQYPGEIKVSVIREVRAVEFAK.

A helical membrane pass occupies residues 7-24; that stretch reads LSSLASALLAGGGTYLVY. Positions 213–279 constitute a KH domain; the sequence is LINVVNLPND…TRTIEALVED (67 aa). The 94-residue stretch at 339–432 folds into the HD domain; the sequence is ALGHSLEVAN…VCAADALSAA (94 aa).

It belongs to the RNase Y family.

It is found in the cell membrane. Endoribonuclease that initiates mRNA decay. The polypeptide is Ribonuclease Y (Wolinella succinogenes (strain ATCC 29543 / DSM 1740 / CCUG 13145 / JCM 31913 / LMG 7466 / NCTC 11488 / FDC 602W) (Vibrio succinogenes)).